A 343-amino-acid polypeptide reads, in one-letter code: Ribosomal RNA small subunit methyltransferase C (343 aa).

It belongs to the methyltransferase superfamily. RsmC family. Monomer.

The protein localises to the cytoplasm. It catalyses the reaction guanosine(1207) in 16S rRNA + S-adenosyl-L-methionine = N(2)-methylguanosine(1207) in 16S rRNA + S-adenosyl-L-homocysteine + H(+). Its function is as follows. Specifically methylates the guanine in position 1207 of 16S rRNA in the 30S particle. The chain is Ribosomal RNA small subunit methyltransferase C from Escherichia coli (strain ATCC 8739 / DSM 1576 / NBRC 3972 / NCIMB 8545 / WDCM 00012 / Crooks).